We begin with the raw amino-acid sequence, 204 residues long: Quinol oxidase subunit 3 (204 aa).

A run of 6 helical transmembrane segments spans residues 27 to 47, 66 to 86, 95 to 115, 118 to 138, 140 to 160, and 184 to 204; these read FWIF…TFFV, LVMI…IAVH, GVVI…GCEI, FVHY…SGFF, LLGT…GILI, and FLDV…LGGL.

This sequence belongs to the cytochrome c oxidase subunit 3 family.

It localises to the cell membrane. The enzyme catalyses 2 a quinol + O2 = 2 a quinone + 2 H2O. In terms of biological role, catalyzes quinol oxidation with the concomitant reduction of oxygen to water. Major component for energy conversion during vegetative growth. The protein is Quinol oxidase subunit 3 (qoxC) of Bacillus subtilis (strain 168).